The following is a 55-amino-acid chain: ATP synthase F(0) complex subunit 8 (55 aa).

The helical transmembrane segment at Phe10–Ile32 threads the bilayer.

It belongs to the ATPase protein 8 family. Component of the ATP synthase complex composed at least of ATP5F1A/subunit alpha, ATP5F1B/subunit beta, ATP5MC1/subunit c (homooctomer), MT-ATP6/subunit a, MT-ATP8/subunit 8, ATP5ME/subunit e, ATP5MF/subunit f, ATP5MG/subunit g, ATP5MK/subunit k, ATP5MJ/subunit j, ATP5F1C/subunit gamma, ATP5F1D/subunit delta, ATP5F1E/subunit epsilon, ATP5PF/subunit F6, ATP5PB/subunit b, ATP5PD/subunit d, ATP5PO/subunit OSCP. ATP synthase complex consists of a soluble F(1) head domain (subunits alpha(3) and beta(3)) - the catalytic core - and a membrane F(0) domain - the membrane proton channel (subunits c, a, 8, e, f, g, k and j). These two domains are linked by a central stalk (subunits gamma, delta, and epsilon) rotating inside the F1 region and a stationary peripheral stalk (subunits F6, b, d, and OSCP).

The protein resides in the mitochondrion membrane. Its function is as follows. Subunit 8, of the mitochondrial membrane ATP synthase complex (F(1)F(0) ATP synthase or Complex V) that produces ATP from ADP in the presence of a proton gradient across the membrane which is generated by electron transport complexes of the respiratory chain. ATP synthase complex consist of a soluble F(1) head domain - the catalytic core - and a membrane F(1) domain - the membrane proton channel. These two domains are linked by a central stalk rotating inside the F(1) region and a stationary peripheral stalk. During catalysis, ATP synthesis in the catalytic domain of F(1) is coupled via a rotary mechanism of the central stalk subunits to proton translocation. In vivo, can only synthesize ATP although its ATP hydrolase activity can be activated artificially in vitro. Part of the complex F(0) domain. The polypeptide is ATP synthase F(0) complex subunit 8 (Guira guira (Guira cuckoo)).